Here is a 203-residue protein sequence, read N- to C-terminus: NAD(P)H dehydrogenase (quinone) (203 aa).

Residues 3–194 (VLIAYYSMYG…AAARYQGKHV (192 aa)) enclose the Flavodoxin-like domain. FMN-binding positions include 9-14 (SMYGHI) and 82-84 (TRF). Y11 provides a ligand contact to NAD(+). W102 is a binding site for substrate. Residues 117 to 123 (SSATQHG) and H138 contribute to the FMN site.

Belongs to the WrbA family. It depends on FMN as a cofactor.

It carries out the reaction a quinone + NADH + H(+) = a quinol + NAD(+). The enzyme catalyses a quinone + NADPH + H(+) = a quinol + NADP(+). In Geotalea uraniireducens (strain Rf4) (Geobacter uraniireducens), this protein is NAD(P)H dehydrogenase (quinone).